Here is a 176-residue protein sequence, read N- to C-terminus: MSLNHVPAGKSLPEDIYVVIEIPANADPIKYEVDKDSGAVFVDRFMSAPMFYPCNYGYVNNTLSLDGDPVDVLVPTPYPLMPGSVIRCRPVGVLKMTDESGEDAKVVAVPHSKISKEYEHIQDVGDIPELLKAQITHFFERYKELESGKWVKVDGWADVEAAKAEILQSYERAQNK.

Substrate-binding residues include lysine 30, arginine 44, and tyrosine 56. Residues aspartate 66, aspartate 71, and aspartate 103 each contribute to the Mg(2+) site. Tyrosine 142 serves as a coordination point for substrate.

Belongs to the PPase family. As to quaternary structure, homohexamer. Mg(2+) is required as a cofactor.

Its subcellular location is the cytoplasm. The enzyme catalyses diphosphate + H2O = 2 phosphate + H(+). Catalyzes the hydrolysis of inorganic pyrophosphate (PPi) forming two phosphate ions. The protein is Inorganic pyrophosphatase of Vibrio parahaemolyticus serotype O3:K6 (strain RIMD 2210633).